Here is a 331-residue protein sequence, read N- to C-terminus: Proton-translocating ferredoxin:NAD(+) oxidoreductase complex subunit D (331 aa).

3 consecutive transmembrane segments (helical) span residues 23–43 (ESVSKIMWSVCLALTPAAVFG), 44–64 (VFNFGIHALEVIITGIIAAVV), and 84–106 (AFLTGLLLSMCLPPDIPPYMVAI). FMN phosphoryl threonine is present on Thr163. 4 helical membrane-spanning segments follow: residues 196-216 (NGSIGETSTILLVLGGLYLIY), 226-246 (VVMIGTVGILTWAFGGTTGIF), 251-271 (VFHMMAGGLVIGAFFMATDMV), and 273-293 (IPMTIKGQIIFALGAGALTSL).

It belongs to the NqrB/RnfD family. In terms of assembly, the complex is composed of six subunits: RnfA, RnfB, RnfC, RnfD, RnfE and RnfG. The cofactor is FMN.

It localises to the cell membrane. Part of a membrane-bound complex that couples electron transfer with translocation of ions across the membrane. Couples electron transfer from reduced ferredoxin to NAD(+) with translocation of H(+) out of the cell. Essential for energy conservation during autotrophic growth. Contributes to ATP synthesis during heterotrophic growth. The protein is Proton-translocating ferredoxin:NAD(+) oxidoreductase complex subunit D of Clostridium ljungdahlii (strain ATCC 55383 / DSM 13528 / PETC).